The sequence spans 134 residues: Large-conductance mechanosensitive channel (134 aa).

2 helical membrane passes run Val-16–Leu-36 and Gly-81–Val-101.

Belongs to the MscL family. In terms of assembly, homopentamer.

Its subcellular location is the cell inner membrane. Its function is as follows. Channel that opens in response to stretch forces in the membrane lipid bilayer. May participate in the regulation of osmotic pressure changes within the cell. This Xylella fastidiosa (strain 9a5c) protein is Large-conductance mechanosensitive channel.